We begin with the raw amino-acid sequence, 379 residues long: 23S rRNA (uracil(747)-C(5))-methyltransferase RlmC (379 aa).

Positions 3, 11, 14, and 86 each coordinate [4Fe-4S] cluster. 4 residues coordinate S-adenosyl-L-methionine: glutamine 211, phenylalanine 240, glutamate 262, and asparagine 310. The active-site Nucleophile is cysteine 337.

It belongs to the class I-like SAM-binding methyltransferase superfamily. RNA M5U methyltransferase family. RlmC subfamily.

The catalysed reaction is uridine(747) in 23S rRNA + S-adenosyl-L-methionine = 5-methyluridine(747) in 23S rRNA + S-adenosyl-L-homocysteine + H(+). In terms of biological role, catalyzes the formation of 5-methyl-uridine at position 747 (m5U747) in 23S rRNA. The protein is 23S rRNA (uracil(747)-C(5))-methyltransferase RlmC of Halothiobacillus neapolitanus (strain ATCC 23641 / c2) (Thiobacillus neapolitanus).